The primary structure comprises 442 residues: Mitochondrial distribution and morphology protein 12 (442 aa).

The SMP-LTD domain occupies Met-1–Val-442. Disordered stretches follow at residues Asn-67–Tyr-125, Leu-202–Arg-277, and Glu-364–Asn-387. The span at Phe-69–Ser-80 shows a compositional bias: acidic residues. Polar residues predominate over residues Pro-90–Pro-100. A compositionally biased stretch (low complexity) spans Asn-101–Asn-112. A compositionally biased stretch (basic and acidic residues) spans Arg-213–Asp-222. A compositionally biased stretch (low complexity) spans Ser-227–Thr-245.

The protein belongs to the MDM12 family. As to quaternary structure, component of the ER-mitochondria encounter structure (ERMES) or MDM complex, composed of MMM1, MDM10, MDM12 and MDM34. An MMM1 homodimer associates with one molecule of MDM12 on each side in a pairwise head-to-tail manner, and the SMP-LTD domains of MMM1 and MDM12 generate a continuous hydrophobic tunnel for phospholipid trafficking.

The protein resides in the mitochondrion outer membrane. It localises to the endoplasmic reticulum membrane. Its function is as follows. Component of the ERMES/MDM complex, which serves as a molecular tether to connect the endoplasmic reticulum (ER) and mitochondria. Components of this complex are involved in the control of mitochondrial shape and protein biogenesis, and function in nonvesicular lipid trafficking between the ER and mitochondria. MDM12 is required for the interaction of the ER-resident membrane protein MMM1 and the outer mitochondrial membrane-resident beta-barrel protein MDM10. The MDM12-MMM1 subcomplex functions in the major beta-barrel assembly pathway that is responsible for biogenesis of all mitochondrial outer membrane beta-barrel proteins, and acts in a late step after the SAM complex. The MDM10-MDM12-MMM1 subcomplex further acts in the TOM40-specific pathway after the action of the MDM12-MMM1 complex. Essential for establishing and maintaining the structure of mitochondria and maintenance of mtDNA nucleoids. This Arthroderma otae (strain ATCC MYA-4605 / CBS 113480) (Microsporum canis) protein is Mitochondrial distribution and morphology protein 12.